The primary structure comprises 199 residues: Chaperone protein TorD (199 aa).

Belongs to the TorD/DmsD family. TorD subfamily.

The protein localises to the cytoplasm. Involved in the biogenesis of TorA. Acts on TorA before the insertion of the molybdenum cofactor and, as a result, probably favors a conformation of the apoenzyme that is competent for acquiring the cofactor. In Shigella dysenteriae serotype 1 (strain Sd197), this protein is Chaperone protein TorD.